The sequence spans 432 residues: Ornithine decarboxylase (432 aa).

Residue K98 is modified to N6-(pyridoxal phosphate)lysine. Pyridoxal 5'-phosphate-binding positions include S229, G266, and 296–299 (EPGR). 341–342 (FD) is a substrate binding site. The Proton donor; shared with dimeric partner role is filled by C377. D378 is a substrate binding site. Pyridoxal 5'-phosphate is bound at residue Y407.

It belongs to the Orn/Lys/Arg decarboxylase class-II family. As to quaternary structure, homodimer. Only the dimer is catalytically active, as the active sites are constructed of residues from both monomers. It depends on pyridoxal 5'-phosphate as a cofactor.

It localises to the cytoplasm. The catalysed reaction is L-ornithine + H(+) = putrescine + CO2. Its pathway is amine and polyamine biosynthesis; putrescine biosynthesis via L-ornithine pathway; putrescine from L-ornithine: step 1/1. Inhibited by antizyme (AZ) OAZ1 in response to polyamine levels. AZ inhibits the assembly of the functional homodimer by binding to ODC monomers and targeting them for ubiquitin-independent proteolytic destruction by the 26S proteasome. In terms of biological role, catalyzes the first and rate-limiting step of polyamine biosynthesis that converts ornithine into putrescine, which is the precursor for the polyamines, spermidine and spermine. Polyamines are essential for cell proliferation and are implicated in cellular processes, ranging from DNA replication to apoptosis. The sequence is that of Ornithine decarboxylase (spe1) from Schizosaccharomyces pombe (strain 972 / ATCC 24843) (Fission yeast).